Here is a 153-residue protein sequence, read N- to C-terminus: T cell receptor delta constant (153 aa).

N-linked (GlcNAc...) asparagine glycosylation is present at Asn14. Cys20 and Cys71 are oxidised to a cystine. N-linked (GlcNAc...) asparagine glycosylation is present at Asn77. Positions 85–102 are enriched in basic and acidic residues; sequence FEVKTDSTDHVKPKETEN. Residues 85 to 112 form a disordered region; that stretch reads FEVKTDSTDHVKPKETENTKQPSKSCHK. Residues 130–152 traverse the membrane as a helical segment; it reads LGLRMLFAKTVAVNFLLTAKLFF.

Gamma-delta TR is a heterodimer composed of a gamma and delta chain; disulfide-linked. The gamma-delta TR is associated with the transmembrane signaling CD3 coreceptor proteins following the stoichiometry: a single gamma-delta TR heterodimer associates with one CD3D-CD3E heterodimer, one CD3G-CD3E heterodimer and one CD247 homodimer forming a stable octameric structure. Upon activation, gamma-delta TR complex associates with FCER1G to initiate intracellular signaling.

It is found in the cell membrane. Constant region of T cell receptor (TR) delta chain that participates in the antigen recognition. Gamma-delta TRs recognize a variety of self and foreign non-peptide antigens frequently expressed at the epithelial boundaries between the host and external environment, including endogenous lipids presented by MH-like protein CD1D and phosphoantigens presented by butyrophilin-like molecule BTN3A1. Upon antigen recognition induces rapid, innate-like immune responses involved in pathogen clearance and tissue repair. Binding of gamma-delta TR complex to antigen triggers phosphorylation of immunoreceptor tyrosine-based activation motifs (ITAMs) in the CD3 chains by the LCK and FYN kinases, allowing the recruitment, phosphorylation, and activation of ZAP70 that facilitates phosphorylation of the scaffolding proteins LCP2 and LAT. This lead to the formation of a supramolecular signalosome that recruits the phospholipase PLCG1, resulting in calcium mobilization and ERK activation, ultimately leading to T cell expansion and differentiation into effector cells. Gamma-delta TRs are produced through somatic rearrangement of a limited repertoire of variable (V), diversity (D), and joining (J) genes. The potential diversity of gamma-delta TRs is conferred by the unique ability to rearrange (D) genes in tandem and to utilize all three reading frames. The combinatorial diversity is considerably increased by the sequence exonuclease trimming and random nucleotide (N) region additions which occur during the V-(D)-J rearrangements. This chain is T cell receptor delta constant, found in Homo sapiens (Human).